An 880-amino-acid chain; its full sequence is Alanine--tRNA ligase (880 aa).

4 residues coordinate Zn(2+): His563, His567, Cys665, and His669.

This sequence belongs to the class-II aminoacyl-tRNA synthetase family. Zn(2+) serves as cofactor.

Its subcellular location is the cytoplasm. The catalysed reaction is tRNA(Ala) + L-alanine + ATP = L-alanyl-tRNA(Ala) + AMP + diphosphate. Catalyzes the attachment of alanine to tRNA(Ala) in a two-step reaction: alanine is first activated by ATP to form Ala-AMP and then transferred to the acceptor end of tRNA(Ala). Also edits incorrectly charged Ser-tRNA(Ala) and Gly-tRNA(Ala) via its editing domain. This is Alanine--tRNA ligase from Desulforudis audaxviator (strain MP104C).